Reading from the N-terminus, the 769-residue chain is Phosphoribosylformylglycinamidine synthase subunit PurL (769 aa).

The span at 1 to 13 (MTGTPSAPTTSPD) shows a compositional bias: polar residues. The disordered stretch occupies residues 1–30 (MTGTPSAPTTSPDDQADGPGEGTVDRQPYR). His-65 is a catalytic residue. Tyr-68 and Lys-109 together coordinate ATP. Glu-111 lines the Mg(2+) pocket. Substrate contacts are provided by residues 112–115 (SHNH) and Arg-134. The active-site Proton acceptor is the His-113. Position 135 (Asp-135) interacts with Mg(2+). Residue Gln-260 coordinates substrate. Residue Asp-288 participates in Mg(2+) binding. 337–339 (ESQ) provides a ligand contact to substrate. ATP-binding residues include Asn-524 and Gly-561. Asn-562 is a binding site for Mg(2+). Position 564 (Ser-564) interacts with substrate.

The protein belongs to the FGAMS family. Monomer. Part of the FGAM synthase complex composed of 1 PurL, 1 PurQ and 2 PurS subunits.

Its subcellular location is the cytoplasm. It catalyses the reaction N(2)-formyl-N(1)-(5-phospho-beta-D-ribosyl)glycinamide + L-glutamine + ATP + H2O = 2-formamido-N(1)-(5-O-phospho-beta-D-ribosyl)acetamidine + L-glutamate + ADP + phosphate + H(+). It functions in the pathway purine metabolism; IMP biosynthesis via de novo pathway; 5-amino-1-(5-phospho-D-ribosyl)imidazole from N(2)-formyl-N(1)-(5-phospho-D-ribosyl)glycinamide: step 1/2. Part of the phosphoribosylformylglycinamidine synthase complex involved in the purines biosynthetic pathway. Catalyzes the ATP-dependent conversion of formylglycinamide ribonucleotide (FGAR) and glutamine to yield formylglycinamidine ribonucleotide (FGAM) and glutamate. The FGAM synthase complex is composed of three subunits. PurQ produces an ammonia molecule by converting glutamine to glutamate. PurL transfers the ammonia molecule to FGAR to form FGAM in an ATP-dependent manner. PurS interacts with PurQ and PurL and is thought to assist in the transfer of the ammonia molecule from PurQ to PurL. This Parafrankia sp. (strain EAN1pec) protein is Phosphoribosylformylglycinamidine synthase subunit PurL.